Here is a 502-residue protein sequence, read N- to C-terminus: Cysteine protease RavZ (502 aa).

2 consecutive short sequence motifs (LIR) follow at residues 9-23 (DKLI…GEQE) and 23-37 (ESDI…GDEK). The interval 49-325 (SIYPPETSWE…ESALTEGKTL (277 aa)) is catalytic region. Catalysis depends on residues His-176 and Asp-197. Residues 211–217 (YFKGKYR) are alpha-3 helix. Residue Cys-258 is part of the active site. Residues 326-431 (PVQLSEFIVA…VLPCVKFDDT (106 aa)) are membrane targeting region. Residues 429 to 443 (DDTIDDFVTIEKDEL) carry the LIR 3 motif.

Its subcellular location is the secreted. The protein resides in the host cytoplasmic vesicle membrane. It carries out the reaction [protein]-C-terminal L-amino acid-glycyl-phosphatidylethanolamide + H2O = a 1,2-diacyl-sn-glycero-3-phosphoethanolamine-N-glycine + [protein]-C-terminal &lt;stereo&gt;L-&lt;/stereo&gt;amino acid. The catalysed reaction is [protein]-C-terminal L-amino acid-glycyl-phosphatidylserine + H2O = 1,2-diacyl-sn-glycero-3-phospho-L-serine-N-glycine + [protein]-C-terminal &lt;stereo&gt;L-&lt;/stereo&gt;amino acid. Its function is as follows. Cysteine protease effector that inhibits host cell autophagy by targeting lipid-conjugated ATG8 family proteins on pre-autophagosomal structures. Specifically hydrolyzes the amide bond between the C-terminal glycine residue and an adjacent aromatic residue in ATG8 proteins conjugated to phosphatidylethanolamine (PE), producing an ATG8 protein that cannot be reconjugated by host ATG7 and ATG3. Mechanistically, Ravz interacts with ATG8 proteins conjugated to PE via its LIR motifs, extracts them from the membrane of autophagosomes and integrates the PE part into its own lipid-binding site. It then removes the lipid component of the ATG8 protein. Also able to mediate delipidation of ATG8 proteins conjugated to phosphatidylserine (PS) during non-canonical autophagy. Inhibits host ubiquitin recruitment to bacteria-containing vacuoles, suggesting that it is able to mediate delipidation of other proteins in addition to ATG8 proteins. It is however not involved in the exclusion of autophagy adapters from bacteria-containing vacuoles decorated with ubiquitin. This is Cysteine protease RavZ from Legionella pneumophila subsp. pneumophila (strain Philadelphia 1 / ATCC 33152 / DSM 7513).